Here is a 186-residue protein sequence, read N- to C-terminus: Ribosome-recycling factor (186 aa).

Belongs to the RRF family.

It is found in the cytoplasm. Its function is as follows. Responsible for the release of ribosomes from messenger RNA at the termination of protein biosynthesis. May increase the efficiency of translation by recycling ribosomes from one round of translation to another. This chain is Ribosome-recycling factor, found in Chlorobium chlorochromatii (strain CaD3).